A 457-amino-acid polypeptide reads, in one-letter code: Siroheme synthase 2 (457 aa).

The segment at 1 to 204 (MDHLPIFCQL…DDEQAVTRIT (204 aa)) is precorrin-2 dehydrogenase /sirohydrochlorin ferrochelatase. Residues 22–23 (DV) and 43–44 (LA) contribute to the NAD(+) site. S128 carries the post-translational modification Phosphoserine. The uroporphyrinogen-III C-methyltransferase stretch occupies residues 216 to 457 (GEVVLVGAGP…RDKLNWFSSK (242 aa)). S-adenosyl-L-methionine is bound at residue P225. D248 serves as the catalytic Proton acceptor. The Proton donor role is filled by K270. Residues 301–303 (GGD), I306, 331–332 (TA), M382, and G411 each bind S-adenosyl-L-methionine.

In the N-terminal section; belongs to the precorrin-2 dehydrogenase / sirohydrochlorin ferrochelatase family. It in the C-terminal section; belongs to the precorrin methyltransferase family.

It catalyses the reaction uroporphyrinogen III + 2 S-adenosyl-L-methionine = precorrin-2 + 2 S-adenosyl-L-homocysteine + H(+). The enzyme catalyses precorrin-2 + NAD(+) = sirohydrochlorin + NADH + 2 H(+). It carries out the reaction siroheme + 2 H(+) = sirohydrochlorin + Fe(2+). Its pathway is cofactor biosynthesis; adenosylcobalamin biosynthesis; precorrin-2 from uroporphyrinogen III: step 1/1. It participates in cofactor biosynthesis; adenosylcobalamin biosynthesis; sirohydrochlorin from precorrin-2: step 1/1. The protein operates within porphyrin-containing compound metabolism; siroheme biosynthesis; precorrin-2 from uroporphyrinogen III: step 1/1. It functions in the pathway porphyrin-containing compound metabolism; siroheme biosynthesis; siroheme from sirohydrochlorin: step 1/1. Its pathway is porphyrin-containing compound metabolism; siroheme biosynthesis; sirohydrochlorin from precorrin-2: step 1/1. Multifunctional enzyme that catalyzes the SAM-dependent methylations of uroporphyrinogen III at position C-2 and C-7 to form precorrin-2 via precorrin-1. Then it catalyzes the NAD-dependent ring dehydrogenation of precorrin-2 to yield sirohydrochlorin. Finally, it catalyzes the ferrochelation of sirohydrochlorin to yield siroheme. This is Siroheme synthase 2 from Cronobacter sakazakii (strain ATCC BAA-894) (Enterobacter sakazakii).